Here is a 290-residue protein sequence, read N- to C-terminus: MSRLGNRAADWADDEEFDDPSALPAQQVTTNKDGTKTVVSYRFNDEGKKVKVTRRIKTTVVREHVNPQVAERRSWAKFGLEKGHAAGPSFDTTSVGENIVFRPSVNWRVQAAEAEKAGPEKGSIKDQLKDKKVKCRICSGEHFTARCPFKDTMAPVDETAAAGAEPGADDVPAAGGLGAGTSSYVPPHLRKGAAAGGERMAGKYEKDDLATLRVTNVSELAEESELRDLFERFGRVTRVFLARDRETQRAKGFAFISFADRTDAARACEKMDGFGYRHLILRVEFAKRAT.

A disordered region spans residues 1-34 (MSRLGNRAADWADDEEFDDPSALPAQQVTTNKDG). Positions 210–288 (ATLRVTNVSE…LILRVEFAKR (79 aa)) constitute an RRM domain.

The protein belongs to the eIF-3 subunit G family. Component of the eukaryotic translation initiation factor 3 (eIF-3) complex.

The protein localises to the cytoplasm. Its function is as follows. RNA-binding component of the eukaryotic translation initiation factor 3 (eIF-3) complex, which is involved in protein synthesis of a specialized repertoire of mRNAs and, together with other initiation factors, stimulates binding of mRNA and methionyl-tRNAi to the 40S ribosome. The eIF-3 complex specifically targets and initiates translation of a subset of mRNAs involved in cell proliferation. This subunit can bind 18S rRNA. In Aspergillus fumigatus (strain CBS 144.89 / FGSC A1163 / CEA10) (Neosartorya fumigata), this protein is Eukaryotic translation initiation factor 3 subunit G (tif35).